Reading from the N-terminus, the 167-residue chain is Translationally-controlled tumor protein homolog (167 aa).

A TCTP domain is found at 1-167 (MIIYTDIISG…WKHGVKAEKI (167 aa)).

Belongs to the TCTP family.

It is found in the cytoplasm. It localises to the cytoskeleton. In terms of biological role, involved in protein synthesis. Involved in microtubule stabilization. This is Translationally-controlled tumor protein homolog from Kluyveromyces lactis (strain ATCC 8585 / CBS 2359 / DSM 70799 / NBRC 1267 / NRRL Y-1140 / WM37) (Yeast).